The following is a 167-amino-acid chain: Shikimate kinase (167 aa).

Position 12-17 (12-17) interacts with ATP; the sequence is GSGKTT. Residue Thr-16 participates in Mg(2+) binding. Asp-34, Arg-58, and Gly-80 together coordinate substrate. Arg-117 is an ATP binding site. Position 135 (Arg-135) interacts with substrate. Arg-152 lines the ATP pocket.

This sequence belongs to the shikimate kinase family. In terms of assembly, monomer. The cofactor is Mg(2+).

The protein localises to the cytoplasm. It catalyses the reaction shikimate + ATP = 3-phosphoshikimate + ADP + H(+). It functions in the pathway metabolic intermediate biosynthesis; chorismate biosynthesis; chorismate from D-erythrose 4-phosphate and phosphoenolpyruvate: step 5/7. Functionally, catalyzes the specific phosphorylation of the 3-hydroxyl group of shikimic acid using ATP as a cosubstrate. The sequence is that of Shikimate kinase from Salinispora arenicola (strain CNS-205).